The chain runs to 564 residues: 4-hydroxybutyrate--CoA ligase 1 (564 aa).

The chain crosses the membrane as a helical span at residues valine 105–proline 125. Residues threonine 204–lysine 212, aspartate 343–threonine 348, aspartate 429, and arginine 444 contribute to the ATP site. Threonine 348 contributes to the substrate binding site. Serine 452 to tyrosine 454 is a CoA binding site. Residue arginine 455 participates in substrate binding. Residues arginine 484, lysine 513, and valine 521–arginine 523 each bind CoA. Lysine 538 lines the ATP pocket.

Belongs to the ATP-dependent AMP-binding enzyme family. The cofactor is Mg(2+). Mn(2+) is required as a cofactor.

It localises to the membrane. The catalysed reaction is 4-hydroxybutanoate + ATP + CoA = 4-hydroxybutanoyl-CoA + AMP + diphosphate. The enzyme catalyses acetate + ATP + CoA = acetyl-CoA + AMP + diphosphate. It catalyses the reaction propanoate + ATP + CoA = propanoyl-CoA + AMP + diphosphate. It carries out the reaction a medium-chain fatty acid + ATP + CoA = a medium-chain fatty acyl-CoA + AMP + diphosphate. Its function is as follows. Involved in the 3-hydroxypropionate/4-hydroxybutyrate cycle which incorporates carbon dioxide into cellular carbon. Catalyzes the ligation of coenzyme A (CoA) to 4-hydroxybutyrate (4HB). It can also use butyrate, valerate, propionate, acetate and 3-hydroxybutyrate (3HB) as substrates. This chain is 4-hydroxybutyrate--CoA ligase 1, found in Metallosphaera sedula (strain ATCC 51363 / DSM 5348 / JCM 9185 / NBRC 15509 / TH2).